Here is a 196-residue protein sequence, read N- to C-terminus: MPIGVPKVPFRNPGEEDAVWVDVYNRLYRERLLFLGQEVDSEISNQLIGLMVYLSIENDTKDLYLFINSPGGWVIPGVAIYDTMQFVQPDVHTICMGLAASMGSFLLAGGEITKRLAFPHARVMIHQPASSFYEAQTGEFILEAEELLKLRESLTRVYVQRTGKPLWVVSEDMERNVFMSATEAQAHGIVDLVAVK.

Ser-101 functions as the Nucleophile in the catalytic mechanism. His-126 is an active-site residue.

It belongs to the peptidase S14 family. Component of the chloroplastic Clp protease core complex.

The protein resides in the plastid. Its subcellular location is the chloroplast stroma. The enzyme catalyses Hydrolysis of proteins to small peptides in the presence of ATP and magnesium. alpha-casein is the usual test substrate. In the absence of ATP, only oligopeptides shorter than five residues are hydrolyzed (such as succinyl-Leu-Tyr-|-NHMec, and Leu-Tyr-Leu-|-Tyr-Trp, in which cleavage of the -Tyr-|-Leu- and -Tyr-|-Trp bonds also occurs).. In terms of biological role, cleaves peptides in various proteins in a process that requires ATP hydrolysis. Has a chymotrypsin-like activity. Plays a major role in the degradation of misfolded proteins. In Gossypium barbadense (Sea Island cotton), this protein is ATP-dependent Clp protease proteolytic subunit.